The primary structure comprises 331 residues: MSTKEKLISHVMKEEPVGSRNKVTVVGVGMVGMASAVSILLKDLCDELAMVDVMEDKLKGEVMDLQHGSLFLKTKIVGDKDYSVTANSKVVVVTAGARQQEGESRLNLVQRNVNIFKFIIPNIVKYSPNCILMVVSNPVDILTYVAWKLSGFPRHRVIGSGTNLDSARFRHLIGEKLHLHPSSCHAWIVGEHGDSSVPVWSGVNVAGVSLQGLNPQMGTEGDGENWKAIHKEVVDGAYEVIKLKGYTSWAIGMSVADLVESIIKNMHKVHPVSTLVQGMHGVKDEVFLSVPCVLGNSGLTDVIHMTLKAEEEKQVQKSAETLWGVQKELIL.

NAD(+) contacts are provided by residues 29-57 and Arg-98; that span reads GMVG…MEDK. 3 residues coordinate substrate: Arg-105, Asn-137, and Arg-168. Asn-137 is an NAD(+) binding site. The active-site Proton acceptor is the His-192. Thr-247 contacts substrate.

It belongs to the LDH/MDH superfamily. LDH family. In terms of assembly, homotetramer.

The protein localises to the cytoplasm. It catalyses the reaction (S)-lactate + NAD(+) = pyruvate + NADH + H(+). It functions in the pathway fermentation; pyruvate fermentation to lactate; (S)-lactate from pyruvate: step 1/1. In terms of biological role, interconverts simultaneously and stereospecifically pyruvate and lactate with concomitant interconversion of NADH and NAD(+). This is L-lactate dehydrogenase A chain (ldha) from Notothenia neglecta (Yellowbelly rockcod).